The sequence spans 372 residues: Cuticle collagen dpy-10 (372 aa).

An N-terminal signal peptide occupies residues 1–45; it reads MKNNAKEDYRTFSLTTNYSRQMIYRCVTGLQIGFSLFSFIIVCVA. 3 triple-helical region regions span residues 144-173, 195-251, and 259-324; these read GPPG…PGTT, GPPG…KGPT, and GPPG…PGVC. Positions 144–372 are disordered; sequence GPPGPRGSSG…RAGYQGYGRK (229 aa). Pro residues predominate over residues 185 to 196; the sequence is EPPPCRPCPKGP. The span at 197 to 208 shows a compositional bias: low complexity; it reads PGIKGWPGFPGD. 2 stretches are compositionally biased toward gly residues: residues 237–246 and 283–292; these read GYRGGPGAPG and GLTGGQGERG. Low complexity predominate over residues 293 to 303; it reads WPGVSGESGEP. Residues 353 to 363 show a composition bias toward gly residues; sequence GYGGSRGGGDR.

It belongs to the cuticular collagen family. Collagen polypeptide chains are complexed within the cuticle by disulfide bonds and other types of covalent cross-links.

Functionally, nematode cuticles are composed largely of collagen-like proteins. The cuticle functions both as an exoskeleton and as a barrier to protect the worm from its environment. In Caenorhabditis elegans, this protein is Cuticle collagen dpy-10 (dpy-10).